The primary structure comprises 1842 residues: Plexin-B2 (1842 aa).

Positions 1-19 (MALPLWALTFLGLTGLGLS) are cleaved as a signal peptide. Residues 20 to 468 (LRSRKPESFR…TQDKVFRLPV (449 aa)) form the Sema domain. Topologically, residues 20–1201 (LRSRKPESFR…EYDTRASDVP (1182 aa)) are extracellular. 2 disulfide bridges follow: Cys78–Cys87 and Cys112–Cys120. Asn127 and Asn242 each carry an N-linked (GlcNAc...) asparagine glycan. 3 disulfide bridges follow: Cys250/Cys366, Cys266/Cys313, and Cys331/Cys353. N-linked (GlcNAc...) asparagine glycans are attached at residues Asn393 and Asn451. 5 cysteine pairs are disulfide-bonded: Cys471/Cys488, Cys477/Cys520, Cys480/Cys497, Cys491/Cys503, and Cys557/Cys576. Asn798 is a glycosylation site (N-linked (GlcNAc...) asparagine). IPT/TIG domains follow at residues 806–895 (PVIT…QFTY), 898–982 (PQPL…SFTY), and 986–1095 (PMIR…VFEY). Asn919, Asn1053, and Asn1072 each carry an N-linked (GlcNAc...) asparagine glycan. The chain crosses the membrane as a helical span at residues 1202-1222 (LSLILPLVMVPMVFIIVVSIY). Topologically, residues 1223–1842 (CYWRKSQQAE…AALENKVTDL (620 aa)) are cytoplasmic. 3 positions are modified to phosphoserine: Ser1240, Ser1248, and Ser1574.

Belongs to the plexin family. Monomer, and heterodimer with PLXNB1. Interacts with MET, ARHGEF11 and ARHGEF12. May also interact with MST1R. As to expression, detected in macrophages from spleen and bone marrow (at protein level). Detected in granule cells in the developing cerebellum, dentate gyrus and olfactory bulb. Expressed in neurons and glia in the developing hippocampus.

Its subcellular location is the cell membrane. Cell surface receptor for SEMA4C, SEMA4D and SEMA4G that plays an important role in cell-cell signaling. Plays a role in glutamatergic synapse development and is required for SEMA4A-mediated excitatory synapse development. Binding to class 4 semaphorins promotes downstream activation of RHOA and phosphorylation of ERBB2 at 'Tyr-1248'. Also acts as a cell surface receptor for angiogenin (ANG); promoting ANG endocytosis and translocation to the cytoplasm or nucleus. Required for normal differentiation and migration of neuronal cells during brain corticogenesis and for normal embryonic brain development. Regulates the migration of cerebellar granule cells in the developing brain. Plays a role in RHOA activation and subsequent changes of the actin cytoskeleton. Plays a role in axon guidance, invasive growth and cell migration. May modulate the activity of RAC1 and CDC42. Down-regulates macrophage migration in wound-healing assays (in vitro). The chain is Plexin-B2 from Mus musculus (Mouse).